Consider the following 386-residue polypeptide: Alanine racemase 1 (386 aa).

The active-site Proton acceptor; specific for D-alanine is Lys38. Lys38 is modified (N6-(pyridoxal phosphate)lysine). Arg136 serves as a coordination point for substrate. The Proton acceptor; specific for L-alanine role is filled by Tyr267. Residue Met315 participates in substrate binding.

Belongs to the alanine racemase family. It depends on pyridoxal 5'-phosphate as a cofactor.

The catalysed reaction is L-alanine = D-alanine. It participates in amino-acid biosynthesis; D-alanine biosynthesis; D-alanine from L-alanine: step 1/1. Functionally, catalyzes the interconversion of L-alanine and D-alanine. May also act on other amino acids. The chain is Alanine racemase 1 (alr1) from Clostridium acetobutylicum (strain ATCC 824 / DSM 792 / JCM 1419 / IAM 19013 / LMG 5710 / NBRC 13948 / NRRL B-527 / VKM B-1787 / 2291 / W).